A 412-amino-acid chain; its full sequence is Adipocyte plasma membrane-associated protein (412 aa).

The interval 1–32 is disordered; sequence MTEADGLRQRRPLRPQVVTDDNRTPEAKGGSS. Residues 1–39 are Cytoplasmic-facing; that stretch reads MTEADGLRQRRPLRPQVVTDDNRTPEAKGGSSFSGRVFR. Phosphothreonine is present on threonine 19. Residues 40-60 traverse the membrane as a helical segment; sequence ATFLMLAAFLTIPLLGALVLL. Residues 61–412 are Extracellular-facing; sequence DSPIDPEPLS…RAPYLCRLRL (352 aa). Residue asparagine 159 is glycosylated (N-linked (GlcNAc...) asparagine).

The protein belongs to the strictosidine synthase family.

Its subcellular location is the membrane. In terms of biological role, exhibits strong arylesterase activity with beta-naphthyl acetate and phenyl acetate. May play a role in adipocyte differentiation. In Bos taurus (Bovine), this protein is Adipocyte plasma membrane-associated protein (APMAP).